A 313-amino-acid polypeptide reads, in one-letter code: Spermatid maturation protein 1 (313 aa).

The helical transmembrane segment at 29-49 (ILLLLGLIICINIGINMVTLL) threads the bilayer. 4 disordered regions span residues 71–90 (KLRSPGKQTQPSKHSSPAVH), 97–151 (AVKM…HNWD), 243–263 (EPPILGPANVPDIPRRRSSGR), and 291–313 (LASGSSTAEGTRKDWVYRSMTER). Residues 76 to 85 (GKQTQPSKHS) are compositionally biased toward polar residues. Over residues 107–122 (TRRRHRRGSSSRRARR) the composition is skewed to basic residues. Residues 263–289 (RVTYDARDVRRRLRELTREVEALSHCY) are a coiled coil. Basic and acidic residues predominate over residues 300–313 (GTRKDWVYRSMTER).

Its subcellular location is the membrane. The protein localises to the cytoplasm. Required for proper cytoplasm removal during spermatogenesis. The polypeptide is Spermatid maturation protein 1 (SPEM1) (Bos taurus (Bovine)).